A 305-amino-acid polypeptide reads, in one-letter code: Translation initiation factor eIF2B subunit alpha (305 aa).

At Lys-35 the chain carries N6-acetyllysine.

This sequence belongs to the eIF-2B alpha/beta/delta subunits family. As to quaternary structure, component of the translation initiation factor 2B (eIF2B) complex which is a heterodecamer of two sets of five different subunits: alpha, beta, gamma, delta and epsilon. Subunits alpha, beta and delta comprise a regulatory subcomplex and subunits epsilon and gamma comprise a catalytic subcomplex. Within the complex, the hexameric regulatory complex resides at the center, with the two heterodimeric catalytic subcomplexes bound on opposite sides.

It is found in the cytoplasm. Its subcellular location is the cytosol. Its activity is regulated as follows. Activated by the chemical integrated stress response (ISR) inhibitor ISRIB which stimulates guanine nucleotide exchange factor activity for both phosphorylated and unphosphorylated eIF2. Functionally, acts as a component of the translation initiation factor 2B (eIF2B) complex, which catalyzes the exchange of GDP for GTP on eukaryotic initiation factor 2 (eIF2) gamma subunit. Its guanine nucleotide exchange factor activity is repressed when bound to eIF2 complex phosphorylated on the alpha subunit, thereby limiting the amount of methionyl-initiator methionine tRNA available to the ribosome and consequently global translation is repressed. The chain is Translation initiation factor eIF2B subunit alpha (Eif2b1) from Rattus norvegicus (Rat).